Here is an 82-residue protein sequence, read N- to C-terminus: Cytotoxin 6 (82 aa).

An N-terminal signal peptide occupies residues 1–21 (MKTLLLTLVVVTIVCLDLGYT). 4 cysteine pairs are disulfide-bonded: C24–C42, C35–C59, C63–C74, and C75–C80.

It belongs to the three-finger toxin family. Short-chain subfamily. Type IA cytotoxin sub-subfamily. Monomer in solution; Homodimer and oligomer in the presence of negatively charged lipids forming a pore with a size ranging between 20 and 30 Angstroms. Expressed by the venom gland.

The protein localises to the secreted. It is found in the target cell membrane. Shows cytolytic activity on many different cells by forming pore in lipid membranes. In vivo, increases heart rate or kills the animal by cardiac arrest. In addition, it binds to heparin with high affinity, interacts with Kv channel-interacting protein 1 (KCNIP1) in a calcium-independent manner, and binds to integrin alpha-V/beta-3 (ITGAV/ITGB3) with moderate affinity. This is Cytotoxin 6 from Naja atra (Chinese cobra).